Here is a 156-residue protein sequence, read N- to C-terminus: Small ribosomal subunit protein uS7 (156 aa).

This sequence belongs to the universal ribosomal protein uS7 family. Part of the 30S ribosomal subunit. Contacts proteins S9 and S11.

In terms of biological role, one of the primary rRNA binding proteins, it binds directly to 16S rRNA where it nucleates assembly of the head domain of the 30S subunit. Is located at the subunit interface close to the decoding center, probably blocks exit of the E-site tRNA. The protein is Small ribosomal subunit protein uS7 of Dichelobacter nodosus (strain VCS1703A).